The following is a 199-amino-acid chain: Proteasome subunit beta type-2-B (199 aa).

M1 carries the N-acetylmethionine modification.

It belongs to the peptidase T1B family. Component of the 20S core complex of the 26S proteasome. The 26S proteasome is composed of a core protease (CP), known as the 20S proteasome, capped at one or both ends by the 19S regulatory particle (RP/PA700). The 20S proteasome core is composed of 28 subunits that are arranged in four stacked rings, resulting in a barrel-shaped structure. The two end rings are each formed by seven alpha subunits, and the two central rings are each formed by seven beta subunits. The catalytic chamber with the active sites is on the inside of the barrel. As to expression, ubiquitous low levels, higher expression in siliques and flowers.

It is found in the cytoplasm. The protein resides in the nucleus. Its function is as follows. Non-catalytic component of the proteasome, a multicatalytic proteinase complex which is characterized by its ability to cleave peptides with Arg, Phe, Tyr, Leu, and Glu adjacent to the leaving group at neutral or slightly basic pH. The proteasome has an ATP-dependent proteolytic activity. The chain is Proteasome subunit beta type-2-B (PBD2) from Arabidopsis thaliana (Mouse-ear cress).